Here is a 211-residue protein sequence, read N- to C-terminus: Octanoyltransferase (211 aa).

The BPL/LPL catalytic domain occupies 32-211; the sequence is DHEPEIIYLV…IQTEFNKIFK (180 aa). Residues 71 to 78, 145 to 147, and 158 to 160 contribute to the substrate site; these read RGGKFTFH, AIG, and GVA. C176 serves as the catalytic Acyl-thioester intermediate.

The protein belongs to the LipB family.

It localises to the cytoplasm. The catalysed reaction is octanoyl-[ACP] + L-lysyl-[protein] = N(6)-octanoyl-L-lysyl-[protein] + holo-[ACP] + H(+). It participates in protein modification; protein lipoylation via endogenous pathway; protein N(6)-(lipoyl)lysine from octanoyl-[acyl-carrier-protein]: step 1/2. Functionally, catalyzes the transfer of endogenously produced octanoic acid from octanoyl-acyl-carrier-protein onto the lipoyl domains of lipoate-dependent enzymes. Lipoyl-ACP can also act as a substrate although octanoyl-ACP is likely to be the physiological substrate. The chain is Octanoyltransferase from Rickettsia massiliae (strain Mtu5).